Here is a 218-residue protein sequence, read N- to C-terminus: Phosphoribosylformylglycinamidine synthase subunit PurQ (218 aa).

The 217-residue stretch at 2–218 (TIGIVVFPGS…IKILQALLSN (217 aa)) folds into the Glutamine amidotransferase type-1 domain. Cys86 serves as the catalytic Nucleophile. Catalysis depends on residues His194 and Glu196.

Part of the FGAM synthase complex composed of 1 PurL, 1 PurQ and 2 PurS subunits.

It localises to the cytoplasm. It catalyses the reaction N(2)-formyl-N(1)-(5-phospho-beta-D-ribosyl)glycinamide + L-glutamine + ATP + H2O = 2-formamido-N(1)-(5-O-phospho-beta-D-ribosyl)acetamidine + L-glutamate + ADP + phosphate + H(+). The enzyme catalyses L-glutamine + H2O = L-glutamate + NH4(+). The protein operates within purine metabolism; IMP biosynthesis via de novo pathway; 5-amino-1-(5-phospho-D-ribosyl)imidazole from N(2)-formyl-N(1)-(5-phospho-D-ribosyl)glycinamide: step 1/2. Functionally, part of the phosphoribosylformylglycinamidine synthase complex involved in the purines biosynthetic pathway. Catalyzes the ATP-dependent conversion of formylglycinamide ribonucleotide (FGAR) and glutamine to yield formylglycinamidine ribonucleotide (FGAM) and glutamate. The FGAM synthase complex is composed of three subunits. PurQ produces an ammonia molecule by converting glutamine to glutamate. PurL transfers the ammonia molecule to FGAR to form FGAM in an ATP-dependent manner. PurS interacts with PurQ and PurL and is thought to assist in the transfer of the ammonia molecule from PurQ to PurL. This is Phosphoribosylformylglycinamidine synthase subunit PurQ from Prochlorococcus marinus (strain SARG / CCMP1375 / SS120).